The sequence spans 187 residues: Guanylate kinase (187 aa).

Residues 5–183 (GRLTVLTGPS…ALKQLETHMQ (179 aa)) enclose the Guanylate kinase-like domain. Residue 12-19 (GPSGVGKG) participates in ATP binding.

This sequence belongs to the guanylate kinase family.

It is found in the cytoplasm. The catalysed reaction is GMP + ATP = GDP + ADP. It catalyses the reaction dZMP + ATP = dZDP + ADP. It functions in the pathway purine metabolism. Its function is as follows. Essential for recycling GMP and indirectly, cGMP. In terms of biological role, (Microbial infection) Catalyzes the phosphorylation of dZMP to dZDP, when the bacterium is infected by a phage that produces the substrate for the synthesis of dZTP (2- amino-2'-deoxyadenosine 5'-triphosphate), which is then used by the phage as a DNA polymerase substrate. The protein is Guanylate kinase of Synechococcus sp. (strain CC9902).